The sequence spans 441 residues: MIKKKLETKLKNFGNQFSELKQRMYFVIFSLIVFRMGSYIPIPGIDTVALASLLEHHRGTIIEMFNMFSGGALSRASIFALGIMPFISSSIIVQILTLIHPKFIEMKKDGEQGRHRINKYIRYITLILAALQSFGMSISLPNIPGLKDVIIDPSISFYGIAIISLITGTIFLMWLGELITEKGIGNGISIIIFSGIVSGLPSSFLNTVEKVRQGSLHVLLFCFIGIVIFLVTLLVVYIERSQRKITISYAKRNLGHRTYSMNSTHLPLKLNMSGVIPAIFASSIVLFPATIASWFGNRDHFKWLVDIVFYLQPTKPLYILTYITAIIFFCFFYTGLAFNPRETADNLKKSGAFILGIRPGEKTAQYINKIMLRLTFLGSMYMAFICLVPELMRFFMDVPFYFGGTSLLIIVVVIIDFISQVQTYIMSTQYESVLKKNKFRF.

The next 10 helical transmembrane spans lie at 25–45 (YFVIFSLIVFRMGSYIPIPGI), 78–98 (IFALGIMPFISSSIIVQILTL), 126–146 (LILAALQSFGMSISLPNIPGL), 155–175 (ISFYGIAIISLITGTIFLMWL), 184–204 (IGNGISIIIFSGIVSGLPSSF), 218–238 (VLLFCFIGIVIFLVTLLVVYI), 275–295 (VIPAIFASSIVLFPATIASWF), 318–338 (YILTYITAIIFFCFFYTGLAF), 376–396 (FLGSMYMAFICLVPELMRFFM), and 398–418 (VPFYFGGTSLLIIVVVIIDFI).

Belongs to the SecY/SEC61-alpha family. As to quaternary structure, component of the Sec protein translocase complex. Heterotrimer consisting of SecY, SecE and SecG subunits. The heterotrimers can form oligomers, although 1 heterotrimer is thought to be able to translocate proteins. Interacts with the ribosome. Interacts with SecDF, and other proteins may be involved. Interacts with SecA.

The protein resides in the cell membrane. In terms of biological role, the central subunit of the protein translocation channel SecYEG. Consists of two halves formed by TMs 1-5 and 6-10. These two domains form a lateral gate at the front which open onto the bilayer between TMs 2 and 7, and are clamped together by SecE at the back. The channel is closed by both a pore ring composed of hydrophobic SecY resides and a short helix (helix 2A) on the extracellular side of the membrane which forms a plug. The plug probably moves laterally to allow the channel to open. The ring and the pore may move independently. The chain is Protein translocase subunit SecY from Buchnera aphidicola subsp. Baizongia pistaciae (strain Bp).